The chain runs to 794 residues: LPS-assembly protein LptD (794 aa).

The N-terminal stretch at 1 to 31 (MPSHCSSLLCARFRLSSLAVIVALAASGVRA) is a signal peptide.

This sequence belongs to the LptD family. As to quaternary structure, component of the lipopolysaccharide transport and assembly complex. Interacts with LptE and LptA.

The protein localises to the cell outer membrane. Together with LptE, is involved in the assembly of lipopolysaccharide (LPS) at the surface of the outer membrane. This chain is LPS-assembly protein LptD, found in Marinobacter nauticus (strain ATCC 700491 / DSM 11845 / VT8) (Marinobacter aquaeolei).